A 539-amino-acid chain; its full sequence is CTP synthase (539 aa).

The segment at 1-267 (MTKYIFVTGG…DQKVCDFLHI (267 aa)) is amidoligase domain. Serine 13 serves as a coordination point for CTP. Residue serine 13 coordinates UTP. An ATP-binding site is contributed by 14–19 (SLGKGI). Tyrosine 54 provides a ligand contact to L-glutamine. Aspartate 71 is an ATP binding site. Positions 71 and 141 each coordinate Mg(2+). CTP is bound by residues 148 to 150 (DME), 188 to 193 (KTKPTQ), and lysine 224. UTP contacts are provided by residues 188–193 (KTKPTQ) and lysine 224. A Glutamine amidotransferase type-1 domain is found at 294 to 537 (KITLVGKYVE…IGAASGLPEQ (244 aa)). L-glutamine is bound at residue glycine 356. Cysteine 383 serves as the catalytic Nucleophile; for glutamine hydrolysis. L-glutamine-binding positions include 384 to 387 (LGMQ), glutamate 407, and arginine 465. Residues histidine 510 and glutamate 512 contribute to the active site.

It belongs to the CTP synthase family. As to quaternary structure, homotetramer.

It carries out the reaction UTP + L-glutamine + ATP + H2O = CTP + L-glutamate + ADP + phosphate + 2 H(+). The catalysed reaction is L-glutamine + H2O = L-glutamate + NH4(+). It catalyses the reaction UTP + NH4(+) + ATP = CTP + ADP + phosphate + 2 H(+). It functions in the pathway pyrimidine metabolism; CTP biosynthesis via de novo pathway; CTP from UDP: step 2/2. Allosterically activated by GTP, when glutamine is the substrate; GTP has no effect on the reaction when ammonia is the substrate. The allosteric effector GTP functions by stabilizing the protein conformation that binds the tetrahedral intermediate(s) formed during glutamine hydrolysis. Inhibited by the product CTP, via allosteric rather than competitive inhibition. Functionally, catalyzes the ATP-dependent amination of UTP to CTP with either L-glutamine or ammonia as the source of nitrogen. Regulates intracellular CTP levels through interactions with the four ribonucleotide triphosphates. The polypeptide is CTP synthase (Lactobacillus helveticus (strain DPC 4571)).